Here is a 341-residue protein sequence, read N- to C-terminus: uncharacterized protein (341 aa).

A coiled-coil region spans residues 153 to 179 (AYTLSEKVMNAEREAEETRETIIREAH). The segment covering 319–335 (EQLQNPAPESAPSTSKT) has biased composition (polar residues). The disordered stretch occupies residues 319-341 (EQLQNPAPESAPSTSKTLRSKNP).

This is an uncharacterized protein from Coxiella burnetii (strain RSA 493 / Nine Mile phase I).